A 110-amino-acid polypeptide reads, in one-letter code: Cell cycle protein GpsB (110 aa).

Residues 37–63 are a coiled coil; the sequence is KDYTVYIALVKELQEENAKLKAKATSA. The disordered stretch occupies residues 59-79; sequence KATSAPASRPAYASATSEPSH. Low complexity predominate over residues 60–75; the sequence is ATSAPASRPAYASATS.

This sequence belongs to the GpsB family. Forms polymers through the coiled coil domains. Interacts with PBP1, MreC and EzrA.

It is found in the cytoplasm. Divisome component that associates with the complex late in its assembly, after the Z-ring is formed, and is dependent on DivIC and PBP2B for its recruitment to the divisome. Together with EzrA, is a key component of the system that regulates PBP1 localization during cell cycle progression. Its main role could be the removal of PBP1 from the cell pole after pole maturation is completed. Also contributes to the recruitment of PBP1 to the division complex. Not essential for septum formation. The protein is Cell cycle protein GpsB of Streptococcus thermophilus (strain CNRZ 1066).